The chain runs to 135 residues: Small ribosomal subunit protein uS9 (135 aa).

A compositionally biased stretch (basic and acidic residues) spans 102-115; sequence PLKTEGHLSRDPRA. The tract at residues 102–135 is disordered; that stretch reads PLKTEGHLSRDPRAKERRKYGLKKARKAPQFSKR. A compositionally biased stretch (basic residues) spans 116–135; the sequence is KERRKYGLKKARKAPQFSKR.

Belongs to the universal ribosomal protein uS9 family.

In Synechococcus sp. (strain CC9311), this protein is Small ribosomal subunit protein uS9.